A 149-amino-acid polypeptide reads, in one-letter code: MGLEKSLILFPLFFLLLGWVQPSLGRESAAQKFQRQHMDPDGSSINSPTYCNQMMKRRDMTNGSCKPVNTFVHEPLADVQAVCSQENVTCKNRKSNCYKSSSALHITDCHLKGNSKYPNCDYKTTQYQKHIIVACEGNPYVPVHFDATV.

Residues 1 to 25 (MGLEKSLILFPLFFLLLGWVQPSLG) form the signal peptide. Substrate-binding residues include Lys-32 and Arg-35. The active-site Proton acceptor is the His-37. 4 disulfide bridges follow: Cys-51–Cys-109, Cys-65–Cys-120, Cys-83–Cys-135, and Cys-90–Cys-97. Residues 66 to 70 (KPVNT) and Lys-91 contribute to the substrate site. Residue His-144 is the Proton donor of the active site.

It belongs to the pancreatic ribonuclease family. Monomer. Interacts with and forms tight 1:1 complexes with RNH1. Dimerization of two such complexes may occur. Interaction with RNH1 inhibits this protein. In terms of tissue distribution, pancreas.

The protein localises to the secreted. It carries out the reaction an [RNA] containing cytidine + H2O = an [RNA]-3'-cytidine-3'-phosphate + a 5'-hydroxy-ribonucleotide-3'-[RNA].. It catalyses the reaction an [RNA] containing uridine + H2O = an [RNA]-3'-uridine-3'-phosphate + a 5'-hydroxy-ribonucleotide-3'-[RNA].. Its function is as follows. Endonuclease that catalyzes the cleavage of RNA on the 3' side of pyrimidine nucleotides. Acts on single-stranded and double-stranded RNA. The chain is Ribonuclease pancreatic (Rnase1) from Mus musculus (Mouse).